The following is a 367-amino-acid chain: Inositol-3-phosphate synthase (367 aa).

Ser-2 carries the N-acetylserine modification. An Isoglutamyl lysine isopeptide (Lys-Gln) (interchain with Q-Cter in protein Pup) cross-link involves residue Lys-73. Asp-78, Ala-137, Tyr-157, Ser-200, Asp-235, and Lys-248 together coordinate NAD(+).

Belongs to the myo-inositol 1-phosphate synthase family. It depends on NAD(+) as a cofactor. Pupylated at Lys-73 by the prokaryotic ubiquitin-like protein Pup, which leads to its degradation by the proteasome.

The catalysed reaction is D-glucose 6-phosphate = 1D-myo-inositol 3-phosphate. In terms of biological role, key enzyme in myo-inositol biosynthesis pathway that catalyzes the conversion of glucose 6-phosphate to 1D-myo-inositol 3-phosphate in a NAD-dependent manner. The chain is Inositol-3-phosphate synthase (ino1) from Mycobacterium tuberculosis (strain ATCC 25618 / H37Rv).